Consider the following 431-residue polypeptide: Trigger factor (431 aa).

The 86-residue stretch at 163–248 folds into the PPIase FKBP-type domain; sequence GHFAVIDFTG…LSEIKVKELP (86 aa).

Belongs to the FKBP-type PPIase family. Tig subfamily.

The protein localises to the cytoplasm. The catalysed reaction is [protein]-peptidylproline (omega=180) = [protein]-peptidylproline (omega=0). Involved in protein export. Acts as a chaperone by maintaining the newly synthesized protein in an open conformation. Functions as a peptidyl-prolyl cis-trans isomerase. This Geobacter sulfurreducens (strain ATCC 51573 / DSM 12127 / PCA) protein is Trigger factor.